Consider the following 145-residue polypeptide: D-aminoacyl-tRNA deacylase (145 aa).

Residues 137-138 (GP) carry the Gly-cisPro motif, important for rejection of L-amino acids motif.

This sequence belongs to the DTD family. As to quaternary structure, homodimer.

It localises to the cytoplasm. It catalyses the reaction glycyl-tRNA(Ala) + H2O = tRNA(Ala) + glycine + H(+). The enzyme catalyses a D-aminoacyl-tRNA + H2O = a tRNA + a D-alpha-amino acid + H(+). In terms of biological role, an aminoacyl-tRNA editing enzyme that deacylates mischarged D-aminoacyl-tRNAs. Also deacylates mischarged glycyl-tRNA(Ala), protecting cells against glycine mischarging by AlaRS. Acts via tRNA-based rather than protein-based catalysis; rejects L-amino acids rather than detecting D-amino acids in the active site. By recycling D-aminoacyl-tRNA to D-amino acids and free tRNA molecules, this enzyme counteracts the toxicity associated with the formation of D-aminoacyl-tRNA entities in vivo and helps enforce protein L-homochirality. The sequence is that of D-aminoacyl-tRNA deacylase from Pectobacterium atrosepticum (strain SCRI 1043 / ATCC BAA-672) (Erwinia carotovora subsp. atroseptica).